The chain runs to 764 residues: 5-methyltetrahydropteroyltriglutamate--homocysteine methyltransferase (764 aa).

Residues Arg16–Lys19 and Lys117 each bind 5-methyltetrahydropteroyltri-L-glutamate. L-homocysteine contacts are provided by residues Ile442–Ser444 and Glu495. L-methionine is bound by residues Ile442–Ser444 and Glu495. 5-methyltetrahydropteroyltri-L-glutamate contacts are provided by residues Arg526 to Cys527 and Trp572. Asp610 is a binding site for L-homocysteine. Asp610 serves as a coordination point for L-methionine. Residue Glu616 coordinates 5-methyltetrahydropteroyltri-L-glutamate. Zn(2+)-binding residues include His652, Cys654, and Glu676. His705 acts as the Proton donor in catalysis. Residue Cys737 coordinates Zn(2+).

It belongs to the vitamin-B12 independent methionine synthase family. Requires Zn(2+) as cofactor.

The enzyme catalyses 5-methyltetrahydropteroyltri-L-glutamate + L-homocysteine = tetrahydropteroyltri-L-glutamate + L-methionine. It participates in amino-acid biosynthesis; L-methionine biosynthesis via de novo pathway; L-methionine from L-homocysteine (MetE route): step 1/1. In terms of biological role, catalyzes the transfer of a methyl group from 5-methyltetrahydrofolate to homocysteine resulting in methionine formation. The chain is 5-methyltetrahydropteroyltriglutamate--homocysteine methyltransferase from Bordetella bronchiseptica (strain ATCC BAA-588 / NCTC 13252 / RB50) (Alcaligenes bronchisepticus).